Consider the following 348-residue polypeptide: Selenide, water dikinase (348 aa).

Residue C17 is part of the active site. ATP is bound by residues K20 and 48–50 (TRD). A Mg(2+)-binding site is contributed by D51. ATP-binding positions include D68, D91, and 139–141 (GHS). Residue D91 participates in Mg(2+) binding. Position 227 (D227) interacts with Mg(2+).

It belongs to the selenophosphate synthase 1 family. Class I subfamily. As to quaternary structure, homodimer. Mg(2+) is required as a cofactor.

It catalyses the reaction hydrogenselenide + ATP + H2O = selenophosphate + AMP + phosphate + 2 H(+). Its function is as follows. Synthesizes selenophosphate from selenide and ATP. The polypeptide is Selenide, water dikinase (Yersinia pseudotuberculosis serotype I (strain IP32953)).